An 851-amino-acid chain; its full sequence is Beta-galactosidase BoGH2A (851 aa).

The first 19 residues, 1–19 (MMIGKLKYLMLGGCLILGS), serve as a signal peptide directing secretion. Residue Cys-20 is the site of N-palmitoyl cysteine attachment. The S-diacylglycerol cysteine moiety is linked to residue Cys-20. Glu-437 (proton donor) is an active-site residue. The Nucleophile role is filled by Glu-544.

The protein belongs to the glycosyl hydrolase 2 family.

The protein resides in the cell inner membrane. It carries out the reaction Hydrolysis of terminal non-reducing beta-D-galactose residues in beta-D-galactosides.. It functions in the pathway glucan metabolism; xyloglucan degradation. Functionally, catalyzes the hydrolysis of terminal non-reducing beta-D-galactose residues in beta-D-galactosides in xyloglucan degradation, converting 'L' units to 'X' units. In Bacteroides ovatus (strain ATCC 8483 / DSM 1896 / JCM 5824 / BCRC 10623 / CCUG 4943 / NCTC 11153), this protein is Beta-galactosidase BoGH2A.